Reading from the N-terminus, the 219-residue chain is Urease accessory protein UreG (219 aa).

The segment at 1–20 is disordered; the sequence is MSALHSIPHRSKKLPPLRVG. 23–30 lines the GTP pocket; the sequence is GPVGSGKT.

The protein belongs to the SIMIBI class G3E GTPase family. UreG subfamily. In terms of assembly, homodimer. UreD, UreF and UreG form a complex that acts as a GTP-hydrolysis-dependent molecular chaperone, activating the urease apoprotein by helping to assemble the nickel containing metallocenter of UreC. The UreE protein probably delivers the nickel.

Its subcellular location is the cytoplasm. Its function is as follows. Facilitates the functional incorporation of the urease nickel metallocenter. This process requires GTP hydrolysis, probably effectuated by UreG. In Methylibium petroleiphilum (strain ATCC BAA-1232 / LMG 22953 / PM1), this protein is Urease accessory protein UreG.